Here is a 525-residue protein sequence, read N- to C-terminus: Peptide chain release factor 3 (525 aa).

Positions 11 to 279 (ERRRTFAIIS…AFVDMAPAPE (269 aa)) constitute a tr-type G domain. GTP-binding positions include 20–27 (SHPDAGKT), 88–92 (DTPGH), and 142–145 (NKLD).

The protein belongs to the TRAFAC class translation factor GTPase superfamily. Classic translation factor GTPase family. PrfC subfamily.

Its subcellular location is the cytoplasm. Its function is as follows. Increases the formation of ribosomal termination complexes and stimulates activities of RF-1 and RF-2. It binds guanine nucleotides and has strong preference for UGA stop codons. It may interact directly with the ribosome. The stimulation of RF-1 and RF-2 is significantly reduced by GTP and GDP, but not by GMP. This is Peptide chain release factor 3 from Latilactobacillus sakei subsp. sakei (strain 23K) (Lactobacillus sakei subsp. sakei).